A 416-amino-acid chain; its full sequence is Deferrochelatase (416 aa).

A signal peptide (tat-type signal) is located at residues 1 to 28 (MSDEQKKPEQIHRRDILKWGAMAGAAVA). Residue 241–243 (GTG) participates in heme b binding. Residues 293-318 (QEDTFGRRKSSGAPFGQKKETDPVKL) are disordered. Positions 326 and 339 each coordinate heme b.

Belongs to the DyP-type peroxidase family. In terms of assembly, component of the iron transporter efeUOB/M complex composed of EfeU, EfeM and EfeB; EfeU is essential for the complex formation. Heme b serves as cofactor. In terms of processing, exported by the Tat system. The position of the signal peptide cleavage has not been experimentally proven.

The protein resides in the secreted. It localises to the cell membrane. It carries out the reaction heme b + 2 H(+) = protoporphyrin IX + Fe(2+). It catalyses the reaction 2 Fe(2+) + H2O2 + 2 H(+) = 2 Fe(3+) + 2 H2O. Its function is as follows. Involved in the recovery of exogenous heme iron. Extracts iron from heme while preserving the protoporphyrin ring intact. Part of the iron transporter system efeUOB/M involved in iron import. Catalyzes the peroxide-mediated oxidation of Fe(2+) into Fe(3+); EfeM binds Fe(3+) and delivers it to the cell membrane permease EfeU. This chain is Deferrochelatase, found in Bacillus subtilis (strain 168).